We begin with the raw amino-acid sequence, 476 residues long: Chromosomal replication initiator protein DnaA (476 aa).

A domain I, interacts with DnaA modulators region spans residues 1 to 75; the sequence is MLAPDTFWLA…TQMAENHFAR (75 aa). Residues 75-139 form a domain II region; that stretch reads RPVQLQLELA…AKEKQEKNPT (65 aa). A disordered region spans residues 110 to 141; sequence FDAPTESAQKAPKDTKDTKDAKEKQEKNPTRL. Positions 120–138 are enriched in basic and acidic residues; the sequence is APKDTKDTKDAKEKQEKNP. The domain III, AAA+ region stretch occupies residues 140-356; the sequence is RLNPSFTFNT…GALKRVVAYS (217 aa). ATP-binding residues include glycine 184, glycine 186, lysine 187, and threonine 188. Residues 357 to 476 are domain IV, binds dsDNA; sequence RFTGHALTLD…FNTLLHILRG (120 aa).

It belongs to the DnaA family. Oligomerizes as a right-handed, spiral filament on DNA at oriC.

The protein localises to the cytoplasm. Plays an essential role in the initiation and regulation of chromosomal replication. ATP-DnaA binds to the origin of replication (oriC) to initiate formation of the DNA replication initiation complex once per cell cycle. Binds the DnaA box (a 9 base pair repeat at the origin) and separates the double-stranded (ds)DNA. Forms a right-handed helical filament on oriC DNA; dsDNA binds to the exterior of the filament while single-stranded (ss)DNA is stabiized in the filament's interior. The ATP-DnaA-oriC complex binds and stabilizes one strand of the AT-rich DNA unwinding element (DUE), permitting loading of DNA polymerase. After initiation quickly degrades to an ADP-DnaA complex that is not apt for DNA replication. Binds acidic phospholipids. In Nitrosospira multiformis (strain ATCC 25196 / NCIMB 11849 / C 71), this protein is Chromosomal replication initiator protein DnaA.